Consider the following 384-residue polypeptide: Alanine racemase (384 aa).

Lys42 functions as the Proton acceptor; specific for D-alanine in the catalytic mechanism. Lys42 is subject to N6-(pyridoxal phosphate)lysine. Arg140 is a substrate binding site. Tyr271 functions as the Proton acceptor; specific for L-alanine in the catalytic mechanism. Met319 is a binding site for substrate.

Belongs to the alanine racemase family. As to quaternary structure, homodimer. Pyridoxal 5'-phosphate is required as a cofactor.

The catalysed reaction is L-alanine = D-alanine. It functions in the pathway amino-acid biosynthesis; D-alanine biosynthesis; D-alanine from L-alanine: step 1/1. Its function is as follows. Catalyzes the interconversion of L-alanine and D-alanine. The protein is Alanine racemase (alr) of Mycobacterium tuberculosis (strain CDC 1551 / Oshkosh).